The sequence spans 146 residues: Hemoglobin cathodic subunit beta (146 aa).

The Globin domain occupies 2–146 (QWSSSERSTI…VVSALSRQYF (145 aa)). Heme b contacts are provided by His-63 and His-92.

It belongs to the globin family. As to quaternary structure, heterotetramer of two alpha chains and two beta chains. As to expression, red blood cells.

Functionally, involved in oxygen transport from the gills to the various peripheral tissues. The sequence is that of Hemoglobin cathodic subunit beta from Conger conger (Conger eel).